A 555-amino-acid polypeptide reads, in one-letter code: Suppressor of tumorigenicity 7 protein-like (555 aa).

The next 2 membrane-spanning stretches (helical) occupy residues 36-56 and 80-100; these read GLAG…LYAL and FYVA…IFEW. Positions 126-148 are disordered; the sequence is TESSISEPGSPSNNRESETSRQN.

This sequence belongs to the ST7 family.

Its subcellular location is the membrane. In Bos taurus (Bovine), this protein is Suppressor of tumorigenicity 7 protein-like (ST7L).